We begin with the raw amino-acid sequence, 304 residues long: Ribosomal protein L11 methyltransferase (304 aa).

The S-adenosyl-L-methionine site is built by threonine 156, glycine 177, aspartate 199, and asparagine 240.

This sequence belongs to the methyltransferase superfamily. PrmA family.

Its subcellular location is the cytoplasm. It catalyses the reaction L-lysyl-[protein] + 3 S-adenosyl-L-methionine = N(6),N(6),N(6)-trimethyl-L-lysyl-[protein] + 3 S-adenosyl-L-homocysteine + 3 H(+). Functionally, methylates ribosomal protein L11. The protein is Ribosomal protein L11 methyltransferase of Symbiobacterium thermophilum (strain DSM 24528 / JCM 14929 / IAM 14863 / T).